Consider the following 486-residue polypeptide: uncharacterized protein (486 aa).

24–35 (IVHLGFGAFHRA) serves as a coordination point for NAD(+).

Belongs to the mannitol dehydrogenase family. UxuB subfamily.

This is an uncharacterized protein from Escherichia coli (strain K12).